Here is a 262-residue protein sequence, read N- to C-terminus: Mlc titration factor A (262 aa).

Zn(2+) contacts are provided by histidine 111, histidine 148, histidine 152, and glutamate 211.

This sequence belongs to the MtfA family. Interacts with Mlc. It depends on Zn(2+) as a cofactor.

The protein localises to the cytoplasm. Functionally, involved in the modulation of the activity of the glucose-phosphotransferase system (glucose-PTS). Interacts with the transcriptional repressor Mlc, preventing its interaction with DNA and leading to the modulation of expression of genes regulated by Mlc, including ptsG, which encodes the PTS system glucose-specific EIICB component. Shows zinc-dependent metallopeptidase activity. In Serratia proteamaculans (strain 568), this protein is Mlc titration factor A.